The chain runs to 352 residues: tRNA (guanine-N(1)-)-methyltransferase (352 aa).

Residues Gly109 and 129 to 134 (IGDYVL) contribute to the S-adenosyl-L-methionine site.

The protein belongs to the RNA methyltransferase TrmD family. In terms of assembly, homodimer.

Its subcellular location is the cytoplasm. It catalyses the reaction guanosine(37) in tRNA + S-adenosyl-L-methionine = N(1)-methylguanosine(37) in tRNA + S-adenosyl-L-homocysteine + H(+). Its function is as follows. Specifically methylates guanosine-37 in various tRNAs. This Chlamydia trachomatis serovar L2 (strain ATCC VR-902B / DSM 19102 / 434/Bu) protein is tRNA (guanine-N(1)-)-methyltransferase.